The following is a 423-amino-acid chain: Serine--tRNA ligase (423 aa).

Residue 231–233 coordinates L-serine; that stretch reads TGE. 262–264 contributes to the ATP binding site; that stretch reads RSE. Residue glutamate 285 coordinates L-serine. 349 to 352 provides a ligand contact to ATP; it reads EISS. Serine 385 serves as a coordination point for L-serine.

This sequence belongs to the class-II aminoacyl-tRNA synthetase family. Type-1 seryl-tRNA synthetase subfamily. In terms of assembly, homodimer. The tRNA molecule binds across the dimer.

The protein resides in the cytoplasm. The catalysed reaction is tRNA(Ser) + L-serine + ATP = L-seryl-tRNA(Ser) + AMP + diphosphate + H(+). The enzyme catalyses tRNA(Sec) + L-serine + ATP = L-seryl-tRNA(Sec) + AMP + diphosphate + H(+). The protein operates within aminoacyl-tRNA biosynthesis; selenocysteinyl-tRNA(Sec) biosynthesis; L-seryl-tRNA(Sec) from L-serine and tRNA(Sec): step 1/1. In terms of biological role, catalyzes the attachment of serine to tRNA(Ser). Is also able to aminoacylate tRNA(Sec) with serine, to form the misacylated tRNA L-seryl-tRNA(Sec), which will be further converted into selenocysteinyl-tRNA(Sec). The sequence is that of Serine--tRNA ligase from Coxiella burnetii (strain RSA 331 / Henzerling II).